The primary structure comprises 455 residues: Bifunctional protein GlmU (455 aa).

Residues 1–228 (MNNTLTTIIL…EFEIEGVNNR (228 aa)) are pyrophosphorylase. Residues 10 to 13 (LAAG), K24, Q75, 80 to 81 (GT), 102 to 104 (YGD), G138, E153, N168, and N226 contribute to the UDP-N-acetyl-alpha-D-glucosamine site. A Mg(2+)-binding site is contributed by D104. N226 contributes to the Mg(2+) binding site. The interval 229-249 (QQLAQLERKWQAKLVEDLQVQ) is linker. Residues 250–455 (GVQFADPNRV…DNYQRPEKKK (206 aa)) form an N-acetyltransferase region. Positions 332 and 350 each coordinate UDP-N-acetyl-alpha-D-glucosamine. H362 serves as the catalytic Proton acceptor. The UDP-N-acetyl-alpha-D-glucosamine site is built by Y365 and N376. Residues A379, 385–386 (NY), A422, and R439 contribute to the acetyl-CoA site.

This sequence in the N-terminal section; belongs to the N-acetylglucosamine-1-phosphate uridyltransferase family. The protein in the C-terminal section; belongs to the transferase hexapeptide repeat family. In terms of assembly, homotrimer. Mg(2+) serves as cofactor.

It localises to the cytoplasm. The enzyme catalyses alpha-D-glucosamine 1-phosphate + acetyl-CoA = N-acetyl-alpha-D-glucosamine 1-phosphate + CoA + H(+). The catalysed reaction is N-acetyl-alpha-D-glucosamine 1-phosphate + UTP + H(+) = UDP-N-acetyl-alpha-D-glucosamine + diphosphate. It functions in the pathway nucleotide-sugar biosynthesis; UDP-N-acetyl-alpha-D-glucosamine biosynthesis; N-acetyl-alpha-D-glucosamine 1-phosphate from alpha-D-glucosamine 6-phosphate (route II): step 2/2. Its pathway is nucleotide-sugar biosynthesis; UDP-N-acetyl-alpha-D-glucosamine biosynthesis; UDP-N-acetyl-alpha-D-glucosamine from N-acetyl-alpha-D-glucosamine 1-phosphate: step 1/1. The protein operates within bacterial outer membrane biogenesis; LPS lipid A biosynthesis. In terms of biological role, catalyzes the last two sequential reactions in the de novo biosynthetic pathway for UDP-N-acetylglucosamine (UDP-GlcNAc). The C-terminal domain catalyzes the transfer of acetyl group from acetyl coenzyme A to glucosamine-1-phosphate (GlcN-1-P) to produce N-acetylglucosamine-1-phosphate (GlcNAc-1-P), which is converted into UDP-GlcNAc by the transfer of uridine 5-monophosphate (from uridine 5-triphosphate), a reaction catalyzed by the N-terminal domain. The sequence is that of Bifunctional protein GlmU from Psychrobacter sp. (strain PRwf-1).